The following is a 452-amino-acid chain: Translation initiation factor eIF2B subunit gamma (452 aa).

Position 1 is an N-acetylmethionine (Met1). Residue Ser260 is modified to Phosphoserine.

It belongs to the eIF-2B gamma/epsilon subunits family. As to quaternary structure, component of the translation initiation factor 2B (eIF2B) complex which is a heterodecamer of two sets of five different subunits: alpha, beta, gamma, delta and epsilon. Subunits alpha, beta and delta comprise a regulatory subcomplex and subunits epsilon and gamma comprise a catalytic subcomplex. Within the complex, the hexameric regulatory complex resides at the center, with the two heterodimeric catalytic subcomplexes bound on opposite sides.

It localises to the cytoplasm. The protein resides in the cytosol. With respect to regulation, activated by the chemical integrated stress response (ISR) inhibitor ISRIB which stimulates guanine nucleotide exchange factor activity for both phosphorylated and unphosphorylated eIF2. Acts as a component of the translation initiation factor 2B (eIF2B) complex, which catalyzes the exchange of GDP for GTP on the eukaryotic initiation factor 2 (eIF2) complex gamma subunit. Its guanine nucleotide exchange factor activity is repressed when bound to eIF2 complex phosphorylated on the alpha subunit, thereby limiting the amount of methionyl-initiator methionine tRNA available to the ribosome and consequently global translation is repressed. This Homo sapiens (Human) protein is Translation initiation factor eIF2B subunit gamma (EIF2B3).